Here is a 451-residue protein sequence, read N- to C-terminus: UPF0210 protein LMHCC_2097 (451 aa).

Belongs to the UPF0210 family. As to quaternary structure, homodimer.

The sequence is that of UPF0210 protein LMHCC_2097 from Listeria monocytogenes serotype 4a (strain HCC23).